A 635-amino-acid chain; its full sequence is MTVVRLPDGTDRVFDNSVTVREVAESISPGLARAALAGKLNGKLVDLSEQIETDSDLVLITDKDSEGLEIIRHSCAHLLAHAVKELFPGTQVTIGPVIENGFYYDFSYERPFTPEDLVAIEKRMQEISKRALKIERKVWDRSRAINFFKDIGEHYKAQIIESIPDNEPVSLYSQGDFTDLCRGPHVPYTSKIKVFKLMKIAGAYWRGDSKNEMLQRIYGTAWVSNEEQNNYLRCLEEAEKRDHRKLGKQLDLFHTQEEAPGMVYWHPKGWVVWQQIEQYMRQTLAGNGYVEIRTPQVLDRSLWESSGHWENFRENMFITESENRHYAIKPMNCPGHVQVFNHGLRSYRDLPLRLAEFGSCHRNEASGALHGLMRVRSFTQDDAHIFCTEDQILGEVTKFIDLLNQVYINFGFSETLIKLSTRPLKRVGTEDQWDKAETALATALNQKELNWEVQPGEGAFYGPKIEFTLKDSLGRKWQCGTLQLDFSMPARLGAGYIAEDNTRKIPVMLHRAILGSMERFIGILIEHHAGALPLWLSPEQVIILNISRNQAEYAQLITDELKQSGIRASSDLRNEKISYKIREHSMQKIPYLMVVGDKEMENRTVTVRGRAGQDYGAMSVESFVVRAQEEIAKRL.

A TGS domain is found at 1–61 (MTVVRLPDGT…ETDSDLVLIT (61 aa)). Positions 242–533 (DHRKLGKQLD…LIEHHAGALP (292 aa)) are catalytic. Zn(2+) is bound by residues Cys-333, His-384, and His-510.

Belongs to the class-II aminoacyl-tRNA synthetase family. Homodimer. The cofactor is Zn(2+).

It localises to the cytoplasm. The enzyme catalyses tRNA(Thr) + L-threonine + ATP = L-threonyl-tRNA(Thr) + AMP + diphosphate + H(+). Functionally, catalyzes the attachment of threonine to tRNA(Thr) in a two-step reaction: L-threonine is first activated by ATP to form Thr-AMP and then transferred to the acceptor end of tRNA(Thr). Also edits incorrectly charged L-seryl-tRNA(Thr). The sequence is that of Threonine--tRNA ligase from Nitrosomonas europaea (strain ATCC 19718 / CIP 103999 / KCTC 2705 / NBRC 14298).